The sequence spans 427 residues: Trigger factor (427 aa).

One can recognise a PPIase FKBP-type domain in the interval 163 to 248 (GDTVILDFEG…LHEIKTKEVP (86 aa)).

Belongs to the FKBP-type PPIase family. Tig subfamily.

The protein localises to the cytoplasm. The enzyme catalyses [protein]-peptidylproline (omega=180) = [protein]-peptidylproline (omega=0). Functionally, involved in protein export. Acts as a chaperone by maintaining the newly synthesized protein in an open conformation. Functions as a peptidyl-prolyl cis-trans isomerase. The chain is Trigger factor from Listeria welshimeri serovar 6b (strain ATCC 35897 / DSM 20650 / CCUG 15529 / CIP 8149 / NCTC 11857 / SLCC 5334 / V8).